We begin with the raw amino-acid sequence, 647 residues long: Chaperone protein DnaK (647 aa).

At Thr198 the chain carries Phosphothreonine; by autocatalysis. Residues 606-634 (GASAEGMDPNQFQQGADNAGESNQADDDV) form a disordered region. Over residues 615–628 (NQFQQGADNAGESN) the composition is skewed to polar residues.

It belongs to the heat shock protein 70 family.

Its function is as follows. Acts as a chaperone. The sequence is that of Chaperone protein DnaK from Psychrobacter cryohalolentis (strain ATCC BAA-1226 / DSM 17306 / VKM B-2378 / K5).